The sequence spans 130 residues: Histidine triad nucleotide-binding protein 1 (130 aa).

The region spanning 22–130 (LFGKIIRKEI…GGRQLQWPPG (109 aa)) is the HIT domain. The Histidine triad motif motif lies at 114 to 118 (HLHLH).

This chain is Histidine triad nucleotide-binding protein 1 (hint-1), found in Caenorhabditis elegans.